Consider the following 1894-residue polypeptide: MSWHEQDYGFGTSSENSKINSDEFEDSMDVTEFNNPGEESTYPQANSWNDSNKTKDIAEYYDYSWSGQREANQQIPQPVPVQPRYPDEQNFSMNGETYPSEAYDYDYSGQEEAINAMNILQGNLERSNEYYSEGVPYSEEDLGAYAGGMTEDDQMYSNFNETGEFNLDIGSSKFSYLNAKNPYPAWIAENSIPITAENILEIFQELQAKFGFQYDSMLNMYDFFMVLLDSRSSRMDAENALKSLHADYIGGRNANYRKWYFSSSMDIDDSVGLQNCKFSSNGPKIKQAKKKQKRKSNKAETEGTNEPETSVQIDPLNVSMENWENEMKNLDCETQVRQLALYLLCWGEANNIRFCPECLCFIFKLANDFMQSEDYAKSEPIEDDCFYLDNVITPLYEFIRDQQFELLDGKLVRRERDHAQIIGYDDINQLFWYPEGIARIVTVDGTQLITLPKWERFHKLSEVDWKKAFYKTFYESRSWFHLVTNFNRIWVIHFTTYWYYTVFNSPTIIEKNFRQSVGPKPIPSCHWTSVSLGGAVATLLMLLATIFEWIHVPRKFPGSRPLLKRFLILILFFILNVAPTVFVFGFSTEEQQRTTGRLTVAIVHFIFSVFTFIYFSLVPLNNLFHRAYKSSSRTHLANRYFTADYARLQINDMCVSWGLWLLVFGAKFTESYFFLSLSFRDPILVLSTMKPYLCNITFLGSHLCIWQPKILLGIMYVTDLVLFFLDTYLWYILVNTVFSVARSFFLGISIWTPWRNIFARMPKRIYSKILCTPEVDSSYKPKVLVSQIWNSIIISLYREHLLAIEHVQRLIYHQVNSLDGDGSKTLKTPTFFVSQEDSSFNTEYFPAHSEAERRLSFFAQSLATPIPEPIPVDAMPTFTVLVPHYGEKILLSLKEIIREQDKLSRVTLLEYLKQLHANEWKCFVRDTKILAEEDALSNQDLNSQDESMKAEQLHKKFDDLPFYCIGFKNATPEYTLRTRIWASLRSQTLYRTVSGFMNYSRAIKLLYRVENPDVAQLFEGQMDVLEYELDRMASRKFKMCVSMQRYAKFTADEIENTEFILRAYPDLLIAYLDEDPPKEGETTPQLYAALIDGYSELDENKKRKPKYRIKLSGNPILGDGKSDNQNLSLPFYRGEYIQLIDANQDNYLEECLKIRSILAEFEAFDLKTNDPYAETNALYQNNPVAIMGAREYIFSENIGILGDVAAGKEQTFGTLFARTMAQIGGKLHYGHPDFLNAIYMTTRGGVSKAQKGLHVNEDIYAGMTALQRGGRIKHCEYYQCGKGRDLGFGSILNFTTKIGTGMGEQMVSREYYYLGTQLPFDRFLSFYYAHPGFHINNIFIMLSVQLFMVVLVNLGGMYHVVTVCDYDHDQKLTVPMRPEGCYQLNPVVNWLKRCIISIFIVFFISFVPLTVQELTERGAWRALTRLGKHFASFSPMFEVFACQTYAQSVIANLSFGGARYIGTGRGFATARLSFSLLFSRFAGPSIYLGSRTLLMLLFGTMTVWIPHLIYFWISTLAMCISPFIFNPHQFSWTDFFVDYREFIRWLSRGNSRSHINSWIGYCRLTRTRITGYKRRLLGVPVSKGVIDTSRAHFTNMFFTEIFIPLMLVPLTLVSYFFIDSQPGNPDPSKVTNPILRILILAFLPIIVAAVVSMTFAGMACMMGPLLDLCCKKFGAVLAALAHGITVFMFIIVFEVSWYLEAWCLAKTVLSMLCIIAIQRFFFKIIQVLFLTRELKHDGTNLAWWTGKWYSRGLGFHALSQPSRELICKMTELNFFAADFFLCHLLLFLMLPVLLIPFIDRWHSMMLFWLKPSKQIRPPIYSMRQNRLRKKIVQRYGTMFFLLLIAFLALIIIPLVVAKDLLANFEMDILRTYGLMQPRDTNWTENGTNWTTVNE.

Disordered regions lie at residues 1–53 (MSWH…DSNK) and 282–310 (GPKI…PETS). The span at 32–51 (EFNNPGEESTYPQANSWNDS) shows a compositional bias: polar residues. Residues 286 to 296 (KQAKKKQKRKS) show a composition bias toward basic residues. 16 consecutive transmembrane segments (helical) span residues 530-550 (VSLG…FEWI), 566-586 (FLIL…VFGF), 600-620 (VAIV…LVPL), 655-675 (VSWG…YFFL), 710-730 (ILLG…TYLW), 731-751 (YILV…ISIW), 1338-1358 (IFIM…GGMY), 1394-1414 (CIIS…VQEL), 1476-1498 (LLFS…MLLF), 1503-1525 (VWIP…PFIF), 1598-1618 (FTEI…YFFI), 1637-1657 (ILIL…TFAG), 1673-1693 (FGAV…IIVF), 1697-1717 (WYLE…IIAI), 1778-1798 (DFFL…IPFI), and 1837-1857 (TMFF…LVVA).

It belongs to the glycosyltransferase 48 family. In terms of assembly, component of the 1,3-beta-glucan synthase (GS) complex, composed of at least the alternate catalytic subunits bgs1, bgs2, bgs3, and bgs4, and a regulatory subunit chr4.

Its subcellular location is the prospore membrane. It catalyses the reaction [(1-&gt;3)-beta-D-glucosyl](n) + UDP-alpha-D-glucose = [(1-&gt;3)-beta-D-glucosyl](n+1) + UDP + H(+). Its function is as follows. Alternate catalytic subunit of the 1,3-beta-glucan synthase (GS) complex. Synthesizes 1,3-beta-glucan, a major structural component of the yeast cell wall. Has a role in ascospore development where it is required for the assembly of a functional spore wall. The sequence is that of 1,3-beta-glucan synthase component bgs2 from Schizosaccharomyces pombe (strain 972 / ATCC 24843) (Fission yeast).